Consider the following 160-residue polypeptide: 3-hydroxyacyl-[acyl-carrier-protein] dehydratase FabZ (160 aa).

Residue His59 is part of the active site.

It belongs to the thioester dehydratase family. FabZ subfamily.

The protein localises to the cytoplasm. The catalysed reaction is a (3R)-hydroxyacyl-[ACP] = a (2E)-enoyl-[ACP] + H2O. In terms of biological role, involved in unsaturated fatty acids biosynthesis. Catalyzes the dehydration of short chain beta-hydroxyacyl-ACPs and long chain saturated and unsaturated beta-hydroxyacyl-ACPs. The sequence is that of 3-hydroxyacyl-[acyl-carrier-protein] dehydratase FabZ from Burkholderia thailandensis (strain ATCC 700388 / DSM 13276 / CCUG 48851 / CIP 106301 / E264).